Consider the following 32-residue polypeptide: Jingzhaotoxin F4-32.60 (32 aa).

3 disulfide bridges follow: C2–C17, C9–C22, and C16–C29. Aspartic acid 1-amide is present on D31.

This sequence belongs to the neurotoxin 10 (Hwtx-1) family. 30 (Jztx-14) subfamily. Amidated as well as non-amidated forms are found in the venom. Expressed by the venom gland.

The protein localises to the secreted. Functionally, probable ion channel inhibitor. This Chilobrachys guangxiensis (Chinese earth tiger tarantula) protein is Jingzhaotoxin F4-32.60.